Here is a 270-residue protein sequence, read N- to C-terminus: MVKVAVTGALGRMGSGIIKTITETDGLDVVAAIDIPNHPKKGQDVGELTGLGKIGVALSTSDELEAVLKESGAEVLVDFTAAAPCVQTAKTASKLGVNLVIGTTGFTPEQRAEMEDAISKNKVAATISQNYAVGVNIFFKTLELLAQKLGDYDIEILEMHHKFKKDAPSGTALRAAEIIQNNLNRDSNVIYGREGITGERTKEEICIHALRGGDIVGDHSVIFTTEGERLELSHRVTSRQSLVSGAVLAIKFVAQKKEGIYNTFDVLDLN.

Residues 8–13 (GALGRM), D34, 102–104 (GTT), and 128–131 (SQNY) each bind NAD(+). The active-site Proton donor/acceptor is H160. Residue H161 participates in (S)-2,3,4,5-tetrahydrodipicolinate binding. K164 (proton donor) is an active-site residue. 170–171 (GT) contributes to the (S)-2,3,4,5-tetrahydrodipicolinate binding site.

Belongs to the DapB family.

Its subcellular location is the cytoplasm. It catalyses the reaction (S)-2,3,4,5-tetrahydrodipicolinate + NAD(+) + H2O = (2S,4S)-4-hydroxy-2,3,4,5-tetrahydrodipicolinate + NADH + H(+). The enzyme catalyses (S)-2,3,4,5-tetrahydrodipicolinate + NADP(+) + H2O = (2S,4S)-4-hydroxy-2,3,4,5-tetrahydrodipicolinate + NADPH + H(+). It participates in amino-acid biosynthesis; L-lysine biosynthesis via DAP pathway; (S)-tetrahydrodipicolinate from L-aspartate: step 4/4. Functionally, catalyzes the conversion of 4-hydroxy-tetrahydrodipicolinate (HTPA) to tetrahydrodipicolinate. The protein is 4-hydroxy-tetrahydrodipicolinate reductase of Methanococcus maripaludis (strain DSM 14266 / JCM 13030 / NBRC 101832 / S2 / LL).